A 274-amino-acid chain; its full sequence is NADPH-dependent 7-cyano-7-deazaguanine reductase (274 aa).

Substrate is bound at residue 80 to 82; the sequence is VES. Position 82–83 (82–83) interacts with NADPH; it reads SK. The active-site Thioimide intermediate is the Cys181. The Proton donor role is filled by Asp188. Position 220–221 (220–221) interacts with substrate; the sequence is HE. 249-250 is an NADPH binding site; it reads RG.

The protein belongs to the GTP cyclohydrolase I family. QueF type 2 subfamily. As to quaternary structure, homodimer.

The protein resides in the cytoplasm. The enzyme catalyses 7-aminomethyl-7-carbaguanine + 2 NADP(+) = 7-cyano-7-deazaguanine + 2 NADPH + 3 H(+). The protein operates within tRNA modification; tRNA-queuosine biosynthesis. Its function is as follows. Catalyzes the NADPH-dependent reduction of 7-cyano-7-deazaguanine (preQ0) to 7-aminomethyl-7-deazaguanine (preQ1). The protein is NADPH-dependent 7-cyano-7-deazaguanine reductase of Burkholderia pseudomallei (strain 1710b).